The chain runs to 367 residues: Protein-glutamate methylesterase/protein-glutamine glutaminase 1 (367 aa).

The 118-residue stretch at 9 to 126 folds into the Response regulatory domain; sequence KVLCVDDSAL…RDGMLDYSEK (118 aa). Aspartate 60 carries the post-translational modification 4-aspartylphosphate. A CheB-type methylesterase domain is found at 168 to 360; that stretch reads LVSTEKLIIV…RRIMARLASM (193 aa). Catalysis depends on residues serine 180, histidine 206, and aspartate 302.

Belongs to the CheB family. Post-translationally, phosphorylated by CheA. Phosphorylation of the N-terminal regulatory domain activates the methylesterase activity.

The protein resides in the cytoplasm. It carries out the reaction [protein]-L-glutamate 5-O-methyl ester + H2O = L-glutamyl-[protein] + methanol + H(+). The enzyme catalyses L-glutaminyl-[protein] + H2O = L-glutamyl-[protein] + NH4(+). Functionally, involved in chemotaxis. Part of a chemotaxis signal transduction system that modulates chemotaxis in response to various stimuli. Catalyzes the demethylation of specific methylglutamate residues introduced into the chemoreceptors (methyl-accepting chemotaxis proteins or MCP) by CheR. Also mediates the irreversible deamidation of specific glutamine residues to glutamic acid. The sequence is that of Protein-glutamate methylesterase/protein-glutamine glutaminase 1 from Burkholderia pseudomallei (strain K96243).